The chain runs to 240 residues: Probable septum site-determining protein MinC (240 aa).

It belongs to the MinC family. Interacts with MinD and FtsZ.

Functionally, cell division inhibitor that blocks the formation of polar Z ring septums. Rapidly oscillates between the poles of the cell to destabilize FtsZ filaments that have formed before they mature into polar Z rings. Prevents FtsZ polymerization. In Aeromonas hydrophila subsp. hydrophila (strain ATCC 7966 / DSM 30187 / BCRC 13018 / CCUG 14551 / JCM 1027 / KCTC 2358 / NCIMB 9240 / NCTC 8049), this protein is Probable septum site-determining protein MinC.